Here is a 449-residue protein sequence, read N- to C-terminus: UDP-N-acetylmuramate--L-alanine ligase (449 aa).

Residue 121–127 (GAHGKSS) participates in ATP binding.

This sequence belongs to the MurCDEF family.

It localises to the cytoplasm. It carries out the reaction UDP-N-acetyl-alpha-D-muramate + L-alanine + ATP = UDP-N-acetyl-alpha-D-muramoyl-L-alanine + ADP + phosphate + H(+). Its pathway is cell wall biogenesis; peptidoglycan biosynthesis. Functionally, cell wall formation. The chain is UDP-N-acetylmuramate--L-alanine ligase from Helicobacter pylori (strain ATCC 700392 / 26695) (Campylobacter pylori).